The sequence spans 141 residues: Large ribosomal subunit protein uL11 (141 aa).

Belongs to the universal ribosomal protein uL11 family. As to quaternary structure, part of the ribosomal stalk of the 50S ribosomal subunit. Interacts with L10 and the large rRNA to form the base of the stalk. L10 forms an elongated spine to which L12 dimers bind in a sequential fashion forming a multimeric L10(L12)X complex. Post-translationally, one or more lysine residues are methylated.

Forms part of the ribosomal stalk which helps the ribosome interact with GTP-bound translation factors. This is Large ribosomal subunit protein uL11 from Nostoc punctiforme (strain ATCC 29133 / PCC 73102).